Consider the following 285-residue polypeptide: 2-dehydro-3-deoxyphosphooctonate aldolase (285 aa).

It belongs to the KdsA family.

Its subcellular location is the cytoplasm. It catalyses the reaction D-arabinose 5-phosphate + phosphoenolpyruvate + H2O = 3-deoxy-alpha-D-manno-2-octulosonate-8-phosphate + phosphate. The protein operates within carbohydrate biosynthesis; 3-deoxy-D-manno-octulosonate biosynthesis; 3-deoxy-D-manno-octulosonate from D-ribulose 5-phosphate: step 2/3. It functions in the pathway bacterial outer membrane biogenesis; lipopolysaccharide biosynthesis. The chain is 2-dehydro-3-deoxyphosphooctonate aldolase from Acinetobacter baumannii (strain AB307-0294).